Here is a 541-residue protein sequence, read N- to C-terminus: Methyl-accepting chemotaxis protein PcaY (541 aa).

At 1-10 (MLANLKIRTG) the chain is on the cytoplasmic side. A helical membrane pass occupies residues 11 to 31 (MFWVLSLFSLTLLFSTASAWW). The Periplasmic segment spans residues 32 to 189 (AAVGSDQQIT…ESDRRLARAQ (158 aa)). The segment at 35–187 (GSDQQITELD…MLESDRRLAR (153 aa)) is ligand-binding domain. A helical membrane pass occupies residues 190 to 210 (LLSLCLLGMTVVLAVLCWAFI). Over 211–541 (AQRVLHPLRE…MTALVGRFKV (331 aa)) the chain is Cytoplasmic. An HAMP domain is found at 212–264 (QRVLHPLREAGGHFRRIASGDLSVPVQGQGNNEIGQLFHELQRMQQSQRDTLG). In terms of domain architecture, Methyl-accepting transducer spans 269–505 (CARQLDAAAS…EVDRNLLNIR (237 aa)). The segment at 322-341 (TSQTTSESNQLAAQSRRQVS) is disordered.

The protein belongs to the methyl-accepting chemotaxis (MCP) protein family.

The protein localises to the cell inner membrane. Chemotactic-signal transducers respond to changes in the concentration of attractants and repellents in the environment, transduce a signal from the outside to the inside of the cell, and facilitate sensory adaptation through the variation of the level of methylation. PcaY is responsible for the detection of multiple aromatic and hydroaromatic compounds that are metabolized through the beta-ketoadipate catabolic pathway, including vanillin, vanillate, 4-hydroxybenzoate (4-HBA), benzoate and protocatechuate. It also senses several nonmetabolizable aromatic compounds. This is Methyl-accepting chemotaxis protein PcaY from Pseudomonas putida (strain ATCC 700007 / DSM 6899 / JCM 31910 / BCRC 17059 / LMG 24140 / F1).